The following is a 265-amino-acid chain: 4-hydroxy-2-oxo-heptane-1,7-dioate aldolase (265 aa).

The Proton acceptor role is filled by histidine 45. Glutamine 147 lines the substrate pocket. Glutamate 149 is an a divalent metal cation binding site. Residues alanine 174 and aspartate 175 each coordinate substrate. Residue aspartate 175 participates in a divalent metal cation binding.

This sequence belongs to the HpcH/HpaI aldolase family. As to quaternary structure, homohexamer; trimer of dimers. A divalent metal cation serves as cofactor.

The enzyme catalyses 4-hydroxy-2-oxoheptanedioate = succinate semialdehyde + pyruvate. The protein operates within aromatic compound metabolism; 4-hydroxyphenylacetate degradation; pyruvate and succinate semialdehyde from 4-hydroxyphenylacetate: step 7/7. Catalyzes the reversible retro-aldol cleavage of 4-hydroxy-2-ketoheptane-1,7-dioate (HKHD) to pyruvate and succinic semialdehyde. This is 4-hydroxy-2-oxo-heptane-1,7-dioate aldolase from Klebsiella pneumoniae subsp. pneumoniae (strain ATCC 700721 / MGH 78578).